We begin with the raw amino-acid sequence, 275 residues long: Elongation factor Ts (275 aa).

An involved in Mg(2+) ion dislocation from EF-Tu region spans residues 76 to 79; the sequence is TDFV.

This sequence belongs to the EF-Ts family.

The protein localises to the cytoplasm. Its function is as follows. Associates with the EF-Tu.GDP complex and induces the exchange of GDP to GTP. It remains bound to the aminoacyl-tRNA.EF-Tu.GTP complex up to the GTP hydrolysis stage on the ribosome. The protein is Elongation factor Ts of Rhodococcus erythropolis (strain PR4 / NBRC 100887).